The primary structure comprises 299 residues: ATP phosphoribosyltransferase (299 aa).

Belongs to the ATP phosphoribosyltransferase family. Long subfamily. In terms of assembly, equilibrium between an active dimeric form, an inactive hexameric form and higher aggregates. Interconversion between the various forms is largely reversible and is influenced by the natural substrates and inhibitors of the enzyme. Mg(2+) serves as cofactor.

It localises to the cytoplasm. It carries out the reaction 1-(5-phospho-beta-D-ribosyl)-ATP + diphosphate = 5-phospho-alpha-D-ribose 1-diphosphate + ATP. It functions in the pathway amino-acid biosynthesis; L-histidine biosynthesis; L-histidine from 5-phospho-alpha-D-ribose 1-diphosphate: step 1/9. Its activity is regulated as follows. Feedback inhibited by histidine. Catalyzes the condensation of ATP and 5-phosphoribose 1-diphosphate to form N'-(5'-phosphoribosyl)-ATP (PR-ATP). Has a crucial role in the pathway because the rate of histidine biosynthesis seems to be controlled primarily by regulation of HisG enzymatic activity. This is ATP phosphoribosyltransferase from Sodalis glossinidius (strain morsitans).